Here is a 500-residue protein sequence, read N- to C-terminus: Probable zinc metalloprotease MGYG_02393 (500 aa).

An N-terminal signal peptide occupies residues 1–24 (MHLSMGGLLPGLALLASANALALA). N-linked (GlcNAc...) asparagine glycans are attached at residues Asn-61, Asn-103, and Asn-124. The Zn(2+) site is built by His-174, Asp-194, and Glu-230. Asn-245 carries an N-linked (GlcNAc...) asparagine glycan. Zn(2+) is bound at residue Asp-257. Positions 414–500 (MPRNVRVNTS…ERGVAVLPFP (87 aa)) constitute a Fibronectin type-III domain. 2 N-linked (GlcNAc...) asparagine glycosylation sites follow: Asn-421 and Asn-427.

It belongs to the peptidase M28 family. M28B subfamily. The cofactor is Zn(2+).

Its subcellular location is the secreted. The protein is Probable zinc metalloprotease MGYG_02393 of Arthroderma gypseum (strain ATCC MYA-4604 / CBS 118893) (Microsporum gypseum).